A 134-amino-acid polypeptide reads, in one-letter code: Retinol-binding protein 2 (134 aa).

All-trans-retinol contacts are provided by Lys-41 and Gln-109.

The protein belongs to the calycin superfamily. Fatty-acid binding protein (FABP) family.

The protein resides in the cytoplasm. Intracellular transport of retinol. The polypeptide is Retinol-binding protein 2 (Rbp2) (Rattus norvegicus (Rat)).